The following is a 455-amino-acid chain: Neuronal acetylcholine receptor subunit beta-3 (455 aa).

Residues 1–20 (MLCLMLCVLCWSRSDVAALG) form the signal peptide. At 21-229 (SVVENEDALL…VTYSFVLRRL (209 aa)) the chain is on the extracellular side. N-linked (GlcNAc...) asparagine glycans are attached at residues Asn48 and Asn163. Cys150 and Cys164 form a disulfide bridge. Helical transmembrane passes span 230-254 (PLFYTLFLIIPCLGLSFLTVLVFYL), 262-279 (LSLSTSVLVSLTVFLLVI), and 296-317 (YLLFIMIFVTLSIIVTVFVINV). Topologically, residues 318–425 (HHRSSATYHP…WKFVAQVLDR (108 aa)) are cytoplasmic. A helical membrane pass occupies residues 426–444 (IFLWLFLVVSVTGSVLIFT).

Belongs to the ligand-gated ion channel (TC 1.A.9) family. Acetylcholine receptor (TC 1.A.9.1) subfamily. Beta-3/CHRNB3 sub-subfamily. In terms of assembly, neuronal AChR seems to be composed of two different type of subunits: alpha and beta. CHRNB3/beta-3 subunit is only able to form functional nAChRs when co-assembled with another beta subunit. Participates in pentameric assemblies along with CHRNA4/alpha-4 and CHRNB2/beta-2 subunits and with CHRNA6/alpha-6 as well, forming stoichiometries such as (CHRNA3:CHRNB4)2:CHRNB3, (CHRNA4:CHRNB2)2:CHRNB3 or (CHRNA6:CHRNB2)2:CHRNB3. Relatively abundant in the developing retina and in the trigeminal ganglion.

It is found in the synaptic cell membrane. The protein resides in the cell membrane. It carries out the reaction Ca(2+)(in) = Ca(2+)(out). It catalyses the reaction K(+)(in) = K(+)(out). The catalysed reaction is Na(+)(in) = Na(+)(out). Activated by a myriad of ligands such as acetylcholine, cytisine, nicotine, choline and epibatidine. In terms of biological role, component of neuronal acetylcholine receptors (nAChRs) that function as pentameric, ligand-gated cation channels with high calcium permeability among other activities. nAChRs are excitatory neurotrasnmitter receptors formed by a collection of nAChR subunits known to mediate synaptic transmission in the nervous system and the neuromuscular junction. Each nAchR subunit confers differential attributes to channel properties, including activation, deactivation and desensitization kinetics, pH sensitivity, cation permeability, and binding to allosteric modulators. Has an accessory rather than functional role and is only able to form functional nAChRs when co-assembled with another beta subunit. Participates in pentameric assemblies along with CHRNA3, CHRNA4, CHRNA6, CHRNB2 and CHRNB4. Modulates receptor assembly and increases receptor sensitivity to nicotine when associated with CHRNB2, CHRNA4 and/or CHRNA6 as well as CHRNA3 and CHRNB4. Seems to play a role in nicotine addiction. This is Neuronal acetylcholine receptor subunit beta-3 (CHRNB3) from Gallus gallus (Chicken).